Here is a 270-residue protein sequence, read N- to C-terminus: Formamidopyrimidine-DNA glycosylase (270 aa).

Residue proline 2 is the Schiff-base intermediate with DNA of the active site. Glutamate 3 functions as the Proton donor in the catalytic mechanism. Residue lysine 58 is the Proton donor; for beta-elimination activity of the active site. 3 residues coordinate DNA: histidine 92, arginine 111, and arginine 153. An FPG-type zinc finger spans residues 238-270 (SVYGASVCPVCGGALRQIRLAQRGTWFCPRCQR). Residue arginine 260 is the Proton donor; for delta-elimination activity of the active site.

The protein belongs to the FPG family. In terms of assembly, monomer. The cofactor is Zn(2+).

It carries out the reaction Hydrolysis of DNA containing ring-opened 7-methylguanine residues, releasing 2,6-diamino-4-hydroxy-5-(N-methyl)formamidopyrimidine.. It catalyses the reaction 2'-deoxyribonucleotide-(2'-deoxyribose 5'-phosphate)-2'-deoxyribonucleotide-DNA = a 3'-end 2'-deoxyribonucleotide-(2,3-dehydro-2,3-deoxyribose 5'-phosphate)-DNA + a 5'-end 5'-phospho-2'-deoxyribonucleoside-DNA + H(+). Involved in base excision repair of DNA damaged by oxidation or by mutagenic agents. Acts as a DNA glycosylase that recognizes and removes damaged bases. Has a preference for oxidized purines, such as 7,8-dihydro-8-oxoguanine (8-oxoG). Has AP (apurinic/apyrimidinic) lyase activity and introduces nicks in the DNA strand. Cleaves the DNA backbone by beta-delta elimination to generate a single-strand break at the site of the removed base with both 3'- and 5'-phosphates. The protein is Formamidopyrimidine-DNA glycosylase of Halorhodospira halophila (strain DSM 244 / SL1) (Ectothiorhodospira halophila (strain DSM 244 / SL1)).